A 523-amino-acid polypeptide reads, in one-letter code: Cysteine-rich secretory protein LCCL domain-containing 1 (523 aa).

The N-terminal stretch at 1–23 (MKYVVQEWLRITTLLFIAQAVSA) is a signal peptide. One can recognise an SCP domain in the interval 66 to 206 (LDLHNKLRGQ…PKAVYLVCNY (141 aa)). Residues 246 to 298 (ERPYSPHEPEEETNEIERQRSKAQDATAQSRPRTHSPSGSTGSEDSEKNEVIS) are disordered. Polar residues predominate over residues 269-288 (QDATAQSRPRTHSPSGSTGS). LCCL domains lie at 302 to 397 (MSQI…ANSF) and 403 to 505 (TVQA…PGKQ). 4 cysteine pairs are disulfide-bonded: Cys308/Cys326, Cys330/Cys350, Cys409/Cys431, and Cys435/Cys458.

The protein belongs to the CRISP family.

Its subcellular location is the secreted. The protein is Cysteine-rich secretory protein LCCL domain-containing 1 (CRISPLD1) of Gallus gallus (Chicken).